We begin with the raw amino-acid sequence, 131 residues long: Translation initiation factor 5A (131 aa).

Position 36 is a hypusine (Lys-36).

Belongs to the eIF-5A family.

The protein localises to the cytoplasm. In terms of biological role, functions by promoting the formation of the first peptide bond. The protein is Translation initiation factor 5A (eIF5A) of Saccharolobus islandicus (strain Y.N.15.51 / Yellowstone #2) (Sulfolobus islandicus).